The following is a 657-amino-acid chain: Glycogen debranching enzyme (657 aa).

D336 acts as the Nucleophile in catalysis. E371 serves as the catalytic Proton donor. Residues 460–479 (ANGEENRDGTNNNYSNNHGK) form a disordered region.

It belongs to the glycosyl hydrolase 13 family.

The enzyme catalyses Hydrolysis of (1-&gt;6)-alpha-D-glucosidic linkages to branches with degrees of polymerization of three or four glucose residues in limit dextrin.. The protein operates within glycan degradation; glycogen degradation. Its function is as follows. Removes maltotriose and maltotetraose chains that are attached by 1,6-alpha-linkage to the limit dextrin main chain, generating a debranched limit dextrin. This Shigella flexneri serotype 5b (strain 8401) protein is Glycogen debranching enzyme.